The following is a 1365-amino-acid chain: Glucosyltransferase-S (1365 aa).

Residues 1–36 constitute a signal peptide (or 37); sequence MEKNLRYKLHKVKKQWVAIGVTTVTLSFLAGGQVVA. 2 stretches are compositionally biased toward polar residues: residues 80–89 and 127–146; these read DQTATSQVSP and RQSA…TSDQ. Disordered stretches follow at residues 80-99 and 127-152; these read DQTA…DNQV and RQSA…HLET. Cell wall-binding repeat units lie at residues 146–166 and 168–187; these read QPGH…NGQR and KNYS…QTGE. Positions 200 to 1000 are catalytic; approximate; it reads QDNVPDSYQA…KPIDPSVKIT (801 aa). Cell wall-binding repeat units follow at residues 1052 to 1071, 1073 to 1092, 1093 to 1112, 1113 to 1133, 1136 to 1159, 1160 to 1179, 1234 to 1253, 1278 to 1298, 1299 to 1318, and 1343 to 1362; these read ANGF…NGQE, KNRF…DGKM, ATGK…NGKQ, LKEG…NGRT, NKGF…DGTI, AIGL…YGYQ, LTGE…NGVQ, GKGW…SGQV, LTGL…KGIQ, and RDRW…NGLA.

It belongs to the glycosyl hydrolase 70 family.

The catalysed reaction is [(1-&gt;6)-alpha-D-glucosyl](n) + sucrose = [(1-&gt;6)-alpha-D-glucosyl](n+1) + D-fructose. Glucan synthesis by GTF-S is independent of primer glucan unlike GTF-I. In terms of biological role, production of extracellular glucans, that are thought to play a key role in the development of the dental plaque because of their ability to adhere to smooth surfaces and mediate the aggregation of bacterial cells and food debris. This is Glucosyltransferase-S (gtfS) from Streptococcus downei (Streptococcus sobrinus).